A 550-amino-acid chain; its full sequence is Coiled-coil domain-containing protein 102A (550 aa).

2 disordered regions span residues 1-69 (MSHG…DGDW) and 138-247 (GARR…ATEE). A phosphoserine mark is found at S12, S26, and S28. Positions 37-61 (SLPPTPPSGTPSPGPPPALPLPPAP) are enriched in pro residues. Residues 72 to 161 (REELRLRELE…ARGRELARLR (90 aa)) are a coiled coil. Basic and acidic residues-rich tracts occupy residues 138–159 (GARRERQEAQGECEARGRELAR) and 169–188 (QTRDGPEPEAEREPVRDVGS). 2 coiled-coil regions span residues 263–396 (QKVL…RRQT) and 427–518 (KLKK…NAPL). Disordered stretches follow at residues 472 to 497 (DELDEAHNQARKLQRSLDEQTEQSEN) and 509 to 550 (LRRQ…IQVA). Acidic residues predominate over residues 530–550 (EEAEDGTSDLDEDEDLQIQVA). S537 is modified (phosphoserine).

The polypeptide is Coiled-coil domain-containing protein 102A (CCDC102A) (Homo sapiens (Human)).